The primary structure comprises 2844 residues: MSDDQATFNDEKAVAKHQVVAYTQRSQVKHENRHIQLVREYGFHPRTKASVEDGDVLPRKFEPFPEHMYGKPLEEIDTFIYEETFCVVSKRFRKNYIHRFTGTKSLFLFYPWSPARRVCVYIATNQFFDYCVMATILFNCIFLAMTETVEEAEYIFLAIYSIEMVIKIIAKGFLLNKYTYLRNPWNWLDFVVITSGYATIGMEVGNLAGLRTFRVLRALKTVSIMPGLKTIINALLHSFRQLAEVMTLTIFCLMVFALFALQVYMGELRNKCVRQVPTDWTNVSHTDWQIWVNDTDNWLYDEDELPVLCGNLTGARHCPFEYVCLCVGENPNHGYTNFDNFMWSMLTTFQLITLDYWENVYNMVLATCGPMSVSFFTVVVFFGSFYLINLMLAVVALSYEEEAEITNEERKKDLLDHRDDSTFSFDPSVLNVKKLNKNNKKKIDSRKGVLLASYSKKKTRRKKTKGGKEGGTNGNGNGSNGDDNKSHSATPSPGPSPRHSATERPSALTMQAQKQYQQMEQQHKLAKSGSGGSNNPMAPTPKGRISFQDSGMGVKNPNMLYPSDYKGQLIANSGQPSSNSSGVNRESSQDDSGVVDDHEEQDTTNDMGHVSTVELALSPREVRLIKCNGNIARIKNHNVYALHQEFSSEVVVIDDLPDRNCDRCVHWCTDYESWLQFQNCLYKVVRDPLFELAITLCIVLNTAFLAMEHHGMSESFRNALDVGNKVFTSIFTFECIVKLMALSKDFFLCGWNIFDLLIVTASLLDIIFELVDGLSVLRGLRLLRVLKLAQSWTTMKVLLSIIISTIGALGNLTLILVIVIYIFAVIGMQLFSKDYTPEKFDPDPVPRWNFNDFFHSFMMIFRILCGEWIEPLWDCMRAEEEQGASTCFAIFLPTLVMGNFMVLNLFLALLLNSFNSEELKSKKEEVGEESKLARSIERVRDLIRKKRQERKDRKERKFAEKFQQIVLDAQQAHAQTLSHQAAVGLERGDKPGVLAETKFHRLSYQESMNRPVSGSDFGFQIPLHDGLHTIVDGLEYDDTGDLPEQIQLQAHPLPPTSDSMPPTYESAMMATTGGSFSSVNGNGTCQNLTPFVQAERRLQHQISSGVSTQQYDSREEATYTESIELLGQYNSTDTDPYANDQRSGCGSFNRGDSLQDNSSRRYGSEEHDEAFLKYQKSLLTRSPSYRKSLDRLSQSSGQSQRSLLKSEEAEMRRHSSGQSLNSMSIEQDELLSQQGNLREELLNCDQKELFQFLQEEEELQKGTKLRRISNVMRSRRPSSQMGQPENETMVEHSEFDNIIQSFEKELEEIKRSTTSLERKLSNLSEPSPAADEATKAIMEHIAIITGASERSAADEVVLPLNPYDSYDLSSVPRRSQSVSAAAQRQSVKLKRRSLEKQRKIDEDFSISNEIRKICDQIHAPFVAMEAMAVAATSASQAQPNQSPFLRRKVDPFTVQFDRFKRLSLIERVEEVPEEEKPISTLRIESEKMPRKFLHGPDQLRLDSLSLKSTNSYENLLIQKQKLGMATPPAVPATPPTSLKSSIEPPTLAQISSLKTTPPLAALTEHQQHFHATSIQAAPTPAHTHAHSQAHAHSMAGQRRRMEHPQSTLDKAASFQSARTESHSSGAADASSALALAMAQKTEQSQSTAPDATQKPSAFTRLTEKPWHCLVSYVDDLTVGGRRNSQGAYNDPMTFPSYGATKAAKVPDDCFPQKCYDHFYFRCPWFMSCMDTQSAKHWTRVRTAVLTVVDTPAFEWFVLVLIFASSITLCFEDINLDKNKTLKRVLYWINFSFCLIFVVEMILKWLALGFSKYFTSFWTILDFIIVFVSVFSLLIEENENLKVLRSLRTLRALRPLRAISRWQGMRIVVNALMYAIPSIFNVLLVCLVFWLIFSIMGVQFFGGKFFKCVNEMGELLPITEVNDKWDCIEQNYTWINSKITFDHVGMGYLALLQVATFEGWMEVMADAVDARGVDLQPQREANLYAYIYFVIFIVCGSFFTLNLFIGVIIDNFNMLKKKYEGGVLEMFLTESQKHYYTAMKKLGRKKPQKVIKRPINHFLAMFYDLSNSRRFEIAIFVLIFLNMLTMGIEHYDQPHAVFFILEVSNAFFTTVFGLEAIVKIVGLRYHYFTVPWNVFDFLLVLASIFGILMEDIMIDLPISPTLLRVVRVFRIGRILRLIKAAKGIRKLLFALVVSLPALFNIGALLGLITFIYAILGMSLFGNVKLQGALDDMVNFQTFGRSMQLLFRLMTSAGWNDVLESLMIQPPDCDPFIHGHTNGNCGHPLLAITYFTSFIIISYMIVINMYIAIILENFNQAHQEEEIGIVEDDLEMFYIRWSKYDPHATQFIHFSQLSDFIASLDPPLGISKPNNVALVSFNLPISKGNKIHCLDILHALVKHVLGHVEETDNFKQLQEQMDVKFKKQFPTRKELEIVSSTRIWKRQEKAAKTIQTGWKEYLRRKREKERSNSGDSATQTSSPGGWQSKLSALNFFHLQVSRRGTACSSRASSRKSSRASDASDLSELAGPWLNLPLMLVSGADEVVKDIKQQNDELGKRGSIFVEAPRASRRRSFYNFFLRHQDAVDDSLTSPSVHRKTAMNNTTNTTSNSASTSGTASSTATAPATGCGPAATSASDSDRHQAVGGGSAPSRKRASSFIRKKPPLERGLSAQSALRVNKNAFVSEASAPEVIVTRPSPEQQTHPHSLSLRPDNATLVHVLVHRESEEYKEEDESSPSVSGNGNGFGVGLDMLSKQPPPQIRITTGSVESSMDTCAMPTVQIMVDSPKDPPRGDFSSAPIDDVGAPIDVNVQGDTSQVFYDYNPEKATDDQGNGQDETAQFESLPDRQR.

Residues 1 to 121 lie on the Cytoplasmic side of the membrane; the sequence is MSDDQATFND…WSPARRVCVY (121 aa). One copy of the I repeat lies at 107–434; the sequence is FLFYPWSPAR…FDPSVLNVKK (328 aa). Residues 122–145 form a helical membrane-spanning segment; sequence IATNQFFDYCVMATILFNCIFLAM. Over 146-151 the chain is Extracellular; sequence TETVEE. Residues 152–172 traverse the membrane as a helical segment; that stretch reads AEYIFLAIYSIEMVIKIIAKG. At 173–183 the chain is on the cytoplasmic side; that stretch reads FLLNKYTYLRN. Residues 184-202 form a helical membrane-spanning segment; sequence PWNWLDFVVITSGYATIGM. The Extracellular segment spans residues 203-208; that stretch reads EVGNLA. The helical; Voltage-sensor transmembrane segment at 209-228 threads the bilayer; that stretch reads GLRTFRVLRALKTVSIMPGL. The Cytoplasmic segment spans residues 229–244; it reads KTIINALLHSFRQLAE. A helical membrane pass occupies residues 245–265; sequence VMTLTIFCLMVFALFALQVYM. At 266–340 the chain is on the extracellular side; it reads GELRNKCVRQ…PNHGYTNFDN (75 aa). A disulfide bridge links Cys272 with Cys318. N-linked (GlcNAc...) asparagine glycosylation is found at Asn282, Asn293, and Asn311. An intramembrane region (pore-forming) is located at residues 341-365; it reads FMWSMLTTFQLITLDYWENVYNMVL. Topologically, residues 366–374 are extracellular; the sequence is ATCGPMSVS. A helical transmembrane segment spans residues 375 to 395; sequence FFTVVVFFGSFYLINLMLAVV. At 396 to 687 the chain is on the cytoplasmic side; sequence ALSYEEEAEI…QNCLYKVVRD (292 aa). Residues 452–610 are disordered; that stretch reads ASYSKKKTRR…QDTTNDMGHV (159 aa). Basic residues predominate over residues 455–465; it reads SKKKTRRKKTK. A compositionally biased stretch (gly residues) spans 469–479; it reads EGGTNGNGNGS. Composition is skewed to low complexity over residues 511–520 and 577–586; these read QAQKQYQQME and SSNSSGVNRE. Acidic residues predominate over residues 593–603; that stretch reads GVVDDHEEQDT. One copy of the II repeat lies at 668–1130; the sequence is CTDYESWLQF…ESIELLGQYN (463 aa). A helical transmembrane segment spans residues 688–708; sequence PLFELAITLCIVLNTAFLAME. Topologically, residues 709–718 are extracellular; that stretch reads HHGMSESFRN. Residues 719–743 traverse the membrane as a helical segment; sequence ALDVGNKVFTSIFTFECIVKLMALS. Topologically, residues 744 to 749 are cytoplasmic; it reads KDFFLC. Residues 750-769 form a helical membrane-spanning segment; the sequence is GWNIFDLLIVTASLLDIIFE. Residues 770-775 lie on the Extracellular side of the membrane; sequence LVDGLS. Residues 776–795 traverse the membrane as a helical; Voltage-sensor segment; that stretch reads VLRGLRLLRVLKLAQSWTTM. The Cytoplasmic segment spans residues 796 to 810; sequence KVLLSIIISTIGALG. The chain crosses the membrane as a helical span at residues 811–832; that stretch reads NLTLILVIVIYIFAVIGMQLFS. Over 833 to 852 the chain is Extracellular; sequence KDYTPEKFDPDPVPRWNFND. An intramembrane region (pore-forming) is located at residues 853–873; it reads FFHSFMMIFRILCGEWIEPLW. Residues 874–889 lie on the Extracellular side of the membrane; sequence DCMRAEEEQGASTCFA. An intrachain disulfide couples Cys875 to Cys887. A helical transmembrane segment spans residues 890–910; sequence IFLPTLVMGNFMVLNLFLALL. Topologically, residues 911–1742 are cytoplasmic; it reads LNSFNSEELK…SAKHWTRVRT (832 aa). Residues 1129–1157 show a composition bias toward polar residues; that stretch reads YNSTDTDPYANDQRSGCGSFNRGDSLQDN. Disordered stretches follow at residues 1129–1166, 1185–1224, 1268–1288, 1577–1630, and 1635–1654; these read YNST…GSEE, YRKS…NSMS, ISNV…ENET, APTP…ADAS, and LAMA…ATQK. Low complexity predominate over residues 1191-1203; sequence RLSQSSGQSQRSL. The segment covering 1204-1213 has biased composition (basic and acidic residues); that stretch reads LKSEEAEMRR. 3 stretches are compositionally biased toward polar residues: residues 1277–1286, 1604–1618, and 1640–1654; these read PSSQMGQPEN, PQST…QSAR, and KTEQ…ATQK. Residues 1723–2040 form an III repeat; that stretch reads PWFMSCMDTQ…QKHYYTAMKK (318 aa). Residues 1743–1763 traverse the membrane as a helical segment; it reads AVLTVVDTPAFEWFVLVLIFA. Residues 1764–1789 lie on the Extracellular side of the membrane; it reads SSITLCFEDINLDKNKTLKRVLYWIN. N-linked (GlcNAc...) asparagine glycosylation is found at Asn1778 and Asn1789. Residues 1790–1810 form a helical membrane-spanning segment; it reads FSFCLIFVVEMILKWLALGFS. Topologically, residues 1811–1813 are cytoplasmic; that stretch reads KYF. Residues 1814 to 1834 traverse the membrane as a helical segment; sequence TSFWTILDFIIVFVSVFSLLI. At 1835 to 1839 the chain is on the extracellular side; the sequence is EENEN. The chain crosses the membrane as a helical; Voltage-sensor span at residues 1840-1861; that stretch reads LKVLRSLRTLRALRPLRAISRW. Residues 1862-1880 are Cytoplasmic-facing; it reads QGMRIVVNALMYAIPSIFN. A helical transmembrane segment spans residues 1881-1902; it reads VLLVCLVFWLIFSIMGVQFFGG. Topologically, residues 1903–1943 are extracellular; it reads KFFKCVNEMGELLPITEVNDKWDCIEQNYTWINSKITFDHV. Asn1930 is a glycosylation site (N-linked (GlcNAc...) asparagine). An intramembrane region (pore-forming) is located at residues 1944–1965; it reads GMGYLALLQVATFEGWMEVMAD. Residues 1966–1981 are Extracellular-facing; the sequence is AVDARGVDLQPQREAN. The helical transmembrane segment at 1982–2002 threads the bilayer; sequence LYAYIYFVIFIVCGSFFTLNL. Over 2003–2069 the chain is Cytoplasmic; the sequence is FIGVIIDNFN…MFYDLSNSRR (67 aa). One copy of the IV repeat lies at 2050 to 2311; sequence IKRPINHFLA…NMYIAIILEN (262 aa). The helical transmembrane segment at 2070–2090 threads the bilayer; that stretch reads FEIAIFVLIFLNMLTMGIEHY. The Extracellular portion of the chain corresponds to 2091-2095; it reads DQPHA. The helical transmembrane segment at 2096 to 2116 threads the bilayer; that stretch reads VFFILEVSNAFFTTVFGLEAI. At 2117-2132 the chain is on the cytoplasmic side; the sequence is VKIVGLRYHYFTVPWN. A helical transmembrane segment spans residues 2133–2153; it reads VFDFLLVLASIFGILMEDIMI. Over 2154-2162 the chain is Extracellular; the sequence is DLPISPTLL. A helical; Voltage-sensor transmembrane segment spans residues 2163–2184; the sequence is RVVRVFRIGRILRLIKAAKGIR. The Cytoplasmic portion of the chain corresponds to 2185–2199; it reads KLLFALVVSLPALFN. The chain crosses the membrane as a helical span at residues 2200 to 2220; sequence IGALLGLITFIYAILGMSLFG. At 2221–2236 the chain is on the extracellular side; it reads NVKLQGALDDMVNFQT. An intramembrane region (pore-forming) is located at residues 2237 to 2259; that stretch reads FGRSMQLLFRLMTSAGWNDVLES. The Extracellular portion of the chain corresponds to 2260-2288; it reads LMIQPPDCDPFIHGHTNGNCGHPLLAITY. The chain crosses the membrane as a helical span at residues 2289–2309; sequence FTSFIIISYMIVINMYIAIIL. Over 2310-2844 the chain is Cytoplasmic; the sequence is ENFNQAHQEE…QFESLPDRQR (535 aa). Residues 2441–2470 enclose the IQ domain; it reads QEKAAKTIQTGWKEYLRRKREKERSNSGDS. 4 disordered regions span residues 2457–2479, 2584–2668, 2780–2802, and 2818–2844; these read RRKR…SPGG, SLTS…LSAQ, DSPK…GAPI, and NPEK…DRQR. The segment covering 2467 to 2479 has biased composition (polar residues); that stretch reads SGDSATQTSSPGG. Residues 2595–2632 are compositionally biased toward low complexity; it reads AMNNTTNTTSNSASTSGTASSTATAPATGCGPAATSAS. Basic residues predominate over residues 2647–2658; the sequence is SRKRASSFIRKK. Residues 2825–2836 show a composition bias toward polar residues; the sequence is DQGNGQDETAQF.

It belongs to the sodium channel (TC 1.A.1.10) family. NaCP60E subfamily. As to expression, in embryonic and larval stages, expression is limited to very few non-neuronal cells in either the CNS or PNS. In pupal and adult stages, expressed in cell bodies of the fly central nervous system, including optic lobes, central brain, subesophageal ganglion, thoracico-abdominal ganglion, major olfactory organs, the third antennal segment and the maxillary palps.

It localises to the cell membrane. Mediates the voltage-dependent sodium ion permeability of excitable membranes. Plays a role in processing of olfactory information during the olfactory avoidance response. The protein is Sodium channel protein 60E (NaCP60E) of Drosophila melanogaster (Fruit fly).